A 306-amino-acid chain; its full sequence is Cysteine synthase (306 aa).

K46 carries the N6-(pyridoxal phosphate)lysine modification. Pyridoxal 5'-phosphate-binding positions include N76, G180 to T184, and S267.

Belongs to the cysteine synthase/cystathionine beta-synthase family. Homodimer. The cofactor is pyridoxal 5'-phosphate.

The catalysed reaction is O-acetyl-L-serine + hydrogen sulfide = L-cysteine + acetate. The protein operates within amino-acid biosynthesis; L-cysteine biosynthesis; L-cysteine from L-serine: step 2/2. The chain is Cysteine synthase (cysM) from Helicobacter pylori (strain ATCC 700392 / 26695) (Campylobacter pylori).